The sequence spans 202 residues: MPAADFVYLASQSPRRAQLLEQLGVRYQRLAPAPDEDTEALEAVLGKESPVAYVKRVTRLKLDAASERAKRQGLAPAPILCSDTTVALGRSILGKPANAAEATRMLRQLSGATHRVLTAVAVQQGRRRIEALSISRVTFAPMTAAQISSYVASGEPMGKAGAYAVQGRVAMYISHISGSYSGIMGLPLHETAWLLRAAGLKI.

Catalysis depends on Asp83, which acts as the Proton acceptor.

Belongs to the Maf family. YhdE subfamily. It depends on a divalent metal cation as a cofactor.

It localises to the cytoplasm. The enzyme catalyses dTTP + H2O = dTMP + diphosphate + H(+). The catalysed reaction is UTP + H2O = UMP + diphosphate + H(+). Its function is as follows. Nucleoside triphosphate pyrophosphatase that hydrolyzes dTTP and UTP. May have a dual role in cell division arrest and in preventing the incorporation of modified nucleotides into cellular nucleic acids. The sequence is that of dTTP/UTP pyrophosphatase from Polaromonas sp. (strain JS666 / ATCC BAA-500).